Reading from the N-terminus, the 361-residue chain is tRNA-specific 2-thiouridylase MnmA (361 aa).

Residues Leu-6 to Ser-13 and Ile-32 contribute to the ATP site. The segment at Asn-93–Asp-95 is interaction with target base in tRNA. Catalysis depends on Cys-98, which acts as the Nucleophile. A disulfide bridge links Cys-98 with Cys-193. Gly-121 contributes to the ATP binding site. The interaction with tRNA stretch occupies residues Lys-143–Gln-145. The active-site Cysteine persulfide intermediate is Cys-193.

It belongs to the MnmA/TRMU family.

It localises to the cytoplasm. It catalyses the reaction S-sulfanyl-L-cysteinyl-[protein] + uridine(34) in tRNA + AH2 + ATP = 2-thiouridine(34) in tRNA + L-cysteinyl-[protein] + A + AMP + diphosphate + H(+). Catalyzes the 2-thiolation of uridine at the wobble position (U34) of tRNA, leading to the formation of s(2)U34. The sequence is that of tRNA-specific 2-thiouridylase MnmA from Porphyromonas gingivalis (strain ATCC 33277 / DSM 20709 / CIP 103683 / JCM 12257 / NCTC 11834 / 2561).